The chain runs to 865 residues: Leucine--tRNA ligase (865 aa).

Positions 48-58 (PYPSGQLHVGH) match the 'HIGH' region motif. The 'KMSKS' region motif lies at 626 to 630 (KMSKS). Residue Lys-629 participates in ATP binding.

Belongs to the class-I aminoacyl-tRNA synthetase family.

It is found in the cytoplasm. It carries out the reaction tRNA(Leu) + L-leucine + ATP = L-leucyl-tRNA(Leu) + AMP + diphosphate. The protein is Leucine--tRNA ligase of Gluconobacter oxydans (strain 621H) (Gluconobacter suboxydans).